The sequence spans 361 residues: Cyclin-D3-3 (361 aa).

It belongs to the cyclin family. Cyclin D subfamily.

Its function is as follows. Promotes divisions in the guard cells (GCs) after the guard mother cells (GMC) symmetric division. The protein is Cyclin-D3-3 (CYCD3-3) of Arabidopsis thaliana (Mouse-ear cress).